Here is a 159-residue protein sequence, read N- to C-terminus: Keratin-associated protein 11-1 (159 aa).

4 tandem repeats follow at residues 107–116, 117–126, 127–136, and 137–146. The 4 X 10 AA approximate repeats stretch occupies residues 107 to 146; the sequence is CQPLSGVSTVCKPVRSISTVCQPVGGVSTICQPTCGVSRT.

The protein belongs to the PMG family. Wool.

Its function is as follows. In the wool cortex, wool keratin intermediate filaments are embedded in an interfilamentous matrix, consisting of wool keratin-associated proteins (KRTAP), which are essential for the formation of a rigid and resistant wool shaft through their extensive disulfide bond cross-linking with abundant cysteine residues of wool keratins. The matrix proteins include the high-sulfur and high-glycine-tyrosine keratins. This is Keratin-associated protein 11-1 (KRTAP11-1) from Capra hircus (Goat).